We begin with the raw amino-acid sequence, 185 residues long: Protein P21 (185 aa).

This Vitis vinifera (Grape) protein is Protein P21.